Reading from the N-terminus, the 176-residue chain is ATP-dependent protease subunit HslV (176 aa).

Threonine 5 is a catalytic residue. Na(+) is bound by residues glycine 161, cysteine 164, and threonine 167.

The protein belongs to the peptidase T1B family. HslV subfamily. In terms of assembly, a double ring-shaped homohexamer of HslV is capped on each side by a ring-shaped HslU homohexamer. The assembly of the HslU/HslV complex is dependent on binding of ATP.

The protein localises to the cytoplasm. It carries out the reaction ATP-dependent cleavage of peptide bonds with broad specificity.. Its activity is regulated as follows. Allosterically activated by HslU binding. Functionally, protease subunit of a proteasome-like degradation complex believed to be a general protein degrading machinery. The sequence is that of ATP-dependent protease subunit HslV from Wolinella succinogenes (strain ATCC 29543 / DSM 1740 / CCUG 13145 / JCM 31913 / LMG 7466 / NCTC 11488 / FDC 602W) (Vibrio succinogenes).